A 714-amino-acid chain; its full sequence is Fatty acid oxidation complex subunit alpha (714 aa).

Residues 1–190 (MDMTSAFTLN…KSGLVDEIVP (190 aa)) are enoyl-CoA hydratase. The segment at 306 to 714 (GTLDSIGILG…FWKTSATDRH (409 aa)) is 3-hydroxyacyl-CoA dehydrogenase.

In the N-terminal section; belongs to the enoyl-CoA hydratase/isomerase family. It in the central section; belongs to the 3-hydroxyacyl-CoA dehydrogenase family. As to quaternary structure, heterotetramer of two alpha chains (FadJ) and two beta chains (FadI).

It is found in the cytoplasm. The enzyme catalyses a (3S)-3-hydroxyacyl-CoA = a (2E)-enoyl-CoA + H2O. It catalyses the reaction a 4-saturated-(3S)-3-hydroxyacyl-CoA = a (3E)-enoyl-CoA + H2O. It carries out the reaction a (3S)-3-hydroxyacyl-CoA + NAD(+) = a 3-oxoacyl-CoA + NADH + H(+). The catalysed reaction is (3S)-3-hydroxybutanoyl-CoA = (3R)-3-hydroxybutanoyl-CoA. It participates in lipid metabolism; fatty acid beta-oxidation. Catalyzes the formation of a hydroxyacyl-CoA by addition of water on enoyl-CoA. Also exhibits 3-hydroxyacyl-CoA epimerase and 3-hydroxyacyl-CoA dehydrogenase activities. This chain is Fatty acid oxidation complex subunit alpha, found in Escherichia fergusonii (strain ATCC 35469 / DSM 13698 / CCUG 18766 / IAM 14443 / JCM 21226 / LMG 7866 / NBRC 102419 / NCTC 12128 / CDC 0568-73).